A 396-amino-acid chain; its full sequence is S-adenosylmethionine synthase (396 aa).

Glutamate 12 contributes to the Mg(2+) binding site. Histidine 18 lines the ATP pocket. Glutamate 46 is a K(+) binding site. Glutamate 59 and glutamine 102 together coordinate L-methionine. Residues 170–172, 238–241, aspartate 249, 255–256, alanine 272, lysine 276, and lysine 280 each bind ATP; these read DGK, SGRF, and RK. Residue aspartate 249 coordinates L-methionine. Residue lysine 280 coordinates L-methionine.

The protein belongs to the AdoMet synthase family. As to quaternary structure, homotetramer. Requires Mn(2+) as cofactor. The cofactor is Mg(2+). Co(2+) is required as a cofactor. K(+) serves as cofactor.

The protein resides in the cytoplasm. It catalyses the reaction L-methionine + ATP + H2O = S-adenosyl-L-methionine + phosphate + diphosphate. The protein operates within amino-acid biosynthesis; S-adenosyl-L-methionine biosynthesis; S-adenosyl-L-methionine from L-methionine: step 1/1. Catalyzes the formation of S-adenosylmethionine from methionine and ATP. The reaction comprises two steps that are both catalyzed by the same enzyme: formation of S-adenosylmethionine (AdoMet) and triphosphate, and subsequent hydrolysis of the triphosphate. The chain is S-adenosylmethionine synthase (SAMS) from Triticum aestivum (Wheat).